A 361-amino-acid chain; its full sequence is RNA-binding protein 4 (361 aa).

2 consecutive RRM domains span residues 2 to 72 (VKLF…ASKN) and 78 to 148 (TKLH…LSTS). Residue K79 forms a Glycyl lysine isopeptide (Lys-Gly) (interchain with G-Cter in SUMO2) linkage. The residue at position 86 (S86) is a Phosphoserine. A CCHC-type zinc finger spans residues 160–177 (SGCYRCGKEGHWSKECPI). An interaction with TNPO3 region spans residues 196 to 361 (AVRTPYTMSY…YADRARYSAF (166 aa)). S306 bears the Phosphoserine mark.

In terms of assembly, interacts with TNPO3; the interaction mediates nuclear import of the protein and is disrupted by nuclear Ran bound to GTP. Interacts with EIF4G1 and WT1. Interacts with EIF4A1; the interaction is modulated under stress-induced conditions. Interacts with AGO1. Interacts with AGO2; the interaction occurs under both cell proliferation and differentiation conditions and in an RNA- and phosphorylation-independent manner. Interacts with DDX5; the interaction occurs in an RNA-independent manner. Interacts with RBPMS; the interaction allows cooperative assembly of RNA-bound stable cell-specific alternative splicing regulatory complexes. Post-translationally, phosphorylated. Phosphorylated in vitro on Ser-306 by SRPK1. Phosphorylation on Ser-306 is induced upon cell stress signaling, which alters its subcellular localization and may modulate its activity on IRES-mediated mRNA translation. Phosphorylated. Phosphorylation on Ser-306 is induced upon cell muscle differentiation. As to expression, expressed in the suprachiasmatic nucleus (SCN). Expressed in myocytes; expression gradually increases during muscle cell differentiation (at protein level). Expressed in the suprachiasmatic nucleus (SCN).

It localises to the nucleus. The protein localises to the nucleolus. The protein resides in the nucleus speckle. Its subcellular location is the cytoplasm. It is found in the cytoplasmic granule. Functionally, RNA-binding factor involved in multiple aspects of cellular processes like alternative splicing of pre-mRNA and translation regulation. Modulates alternative 5'-splice site and exon selection. Acts as a muscle cell differentiation-promoting factor. Activates exon skipping of the PTB pre-mRNA during muscle cell differentiation. Antagonizes the activity of the splicing factor PTBP1 to modulate muscle cell-specific exon selection of alpha tropomyosin. Binds to intronic pyrimidine-rich sequence of the TPM1 and MAPT pre-mRNAs. Required for the translational activation of PER1 mRNA in response to circadian clock. Binds directly to the 3'-UTR of the PER1 mRNA. Exerts a suppressive activity on Cap-dependent translation via binding to CU-rich responsive elements within the 3'UTR of mRNAs, a process increased under stress conditions or during myocytes differentiation. Recruits EIF4A1 to stimulate IRES-dependent translation initiation in respons to cellular stress. Associates to internal ribosome entry segment (IRES) in target mRNA species under stress conditions. Plays a role for miRNA-guided RNA cleavage and translation suppression by promoting association of AGO2-containing miRNPs with their cognate target mRNAs. Associates with miRNAs during muscle cell differentiation. Binds preferentially to 5'-CGCGCG[GCA]-3' motif in vitro. This Mus musculus (Mouse) protein is RNA-binding protein 4 (Rbm4).